A 560-amino-acid chain; its full sequence is Membrane protein insertase YidC (560 aa).

Transmembrane regions (helical) follow at residues 7–27 (NLIAAIVLSLSIIFGWQYFVV), 334–354 (AIDFGWFYIITKPVFYAMNFF), 357–377 (YVGNFGISILIVTVIIKLLMF), 431–451 (LPILVQIPVFFSIYKVLYVTI), 476–496 (LFGFLPFSPPSFLMIGAWPIL), and 522–542 (FMPLIFLVMFSSFPVGLLIYW).

Belongs to the OXA1/ALB3/YidC family. Type 1 subfamily. As to quaternary structure, interacts with the Sec translocase complex via SecD. Specifically interacts with transmembrane segments of nascent integral membrane proteins during membrane integration.

It is found in the cell inner membrane. Required for the insertion and/or proper folding and/or complex formation of integral membrane proteins into the membrane. Involved in integration of membrane proteins that insert both dependently and independently of the Sec translocase complex, as well as at least some lipoproteins. Aids folding of multispanning membrane proteins. This is Membrane protein insertase YidC from Rickettsia canadensis (strain McKiel).